A 342-amino-acid polypeptide reads, in one-letter code: ATPase asna-1 (342 aa).

An ATP-binding site is contributed by 26–33 (KGGVGKTT). Asp-55 is an active-site residue. Glu-243 and Asn-270 together coordinate ATP. Residues Cys-285 and Cys-288 each coordinate Zn(2+).

The protein belongs to the arsA ATPase family. As to quaternary structure, homodimer.

It is found in the cytoplasm. The protein resides in the endoplasmic reticulum. ATPase required for the post-translational delivery of tail-anchored (TA) proteins to the endoplasmic reticulum. Recognizes and selectively binds the transmembrane domain of TA proteins in the cytosol. This complex then targets to the endoplasmic reticulum by membrane-bound receptors, where the tail-anchored protein is released for insertion. This process is regulated by ATP binding and hydrolysis. ATP binding drives the homodimer towards the closed dimer state, facilitating recognition of newly synthesized TA membrane proteins. ATP hydrolysis is required for insertion. Subsequently, the homodimer reverts towards the open dimer state, lowering its affinity for the membrane-bound receptor, and returning it to the cytosol to initiate a new round of targeting. May be involved in insulin signaling. This is ATPase asna-1 from Caenorhabditis elegans.